Reading from the N-terminus, the 296-residue chain is 4-diphosphocytidyl-2-C-methyl-D-erythritol kinase (296 aa).

K11 is a catalytic residue. P95 to S105 lines the ATP pocket. D137 is an active-site residue.

This sequence belongs to the GHMP kinase family. IspE subfamily.

It catalyses the reaction 4-CDP-2-C-methyl-D-erythritol + ATP = 4-CDP-2-C-methyl-D-erythritol 2-phosphate + ADP + H(+). It functions in the pathway isoprenoid biosynthesis; isopentenyl diphosphate biosynthesis via DXP pathway; isopentenyl diphosphate from 1-deoxy-D-xylulose 5-phosphate: step 3/6. Its function is as follows. Catalyzes the phosphorylation of the position 2 hydroxy group of 4-diphosphocytidyl-2C-methyl-D-erythritol. This is 4-diphosphocytidyl-2-C-methyl-D-erythritol kinase from Clostridioides difficile (strain 630) (Peptoclostridium difficile).